The following is a 365-amino-acid chain: UDP-N-acetylglucosamine--N-acetylmuramyl-(pentapeptide) pyrophosphoryl-undecaprenol N-acetylglucosamine transferase (365 aa).

UDP-N-acetyl-alpha-D-glucosamine contacts are provided by residues T10–G12, N128, R170, S199, I250, and Q295.

It belongs to the glycosyltransferase 28 family. MurG subfamily.

The protein resides in the cell inner membrane. It carries out the reaction di-trans,octa-cis-undecaprenyl diphospho-N-acetyl-alpha-D-muramoyl-L-alanyl-D-glutamyl-meso-2,6-diaminopimeloyl-D-alanyl-D-alanine + UDP-N-acetyl-alpha-D-glucosamine = di-trans,octa-cis-undecaprenyl diphospho-[N-acetyl-alpha-D-glucosaminyl-(1-&gt;4)]-N-acetyl-alpha-D-muramoyl-L-alanyl-D-glutamyl-meso-2,6-diaminopimeloyl-D-alanyl-D-alanine + UDP + H(+). The protein operates within cell wall biogenesis; peptidoglycan biosynthesis. Its function is as follows. Cell wall formation. Catalyzes the transfer of a GlcNAc subunit on undecaprenyl-pyrophosphoryl-MurNAc-pentapeptide (lipid intermediate I) to form undecaprenyl-pyrophosphoryl-MurNAc-(pentapeptide)GlcNAc (lipid intermediate II). The polypeptide is UDP-N-acetylglucosamine--N-acetylmuramyl-(pentapeptide) pyrophosphoryl-undecaprenol N-acetylglucosamine transferase (Prosthecochloris aestuarii (strain DSM 271 / SK 413)).